The chain runs to 335 residues: Methionine import ATP-binding protein MetN (335 aa).

In terms of domain architecture, ABC transporter spans 2 to 241 (IEFQRLHKSY…PKHVTTRRFV (240 aa)). 38–45 (GHSGAGKS) contributes to the ATP binding site.

This sequence belongs to the ABC transporter superfamily. Methionine importer (TC 3.A.1.24) family. In terms of assembly, the complex is composed of two ATP-binding proteins (MetN), two transmembrane proteins (MetI) and a solute-binding protein (MetQ).

Its subcellular location is the cell inner membrane. The enzyme catalyses L-methionine(out) + ATP + H2O = L-methionine(in) + ADP + phosphate + H(+). It catalyses the reaction D-methionine(out) + ATP + H2O = D-methionine(in) + ADP + phosphate + H(+). Functionally, part of the ABC transporter complex MetNIQ involved in methionine import. Responsible for energy coupling to the transport system. The protein is Methionine import ATP-binding protein MetN of Xanthomonas oryzae pv. oryzae (strain MAFF 311018).